The chain runs to 602 residues: mRNA-decapping enzyme 1A (602 aa).

Phosphoserine is present on serine 82. The segment covering 152-161 (RSQQAARDKQ) has biased composition (basic and acidic residues). 3 disordered regions span residues 152–174 (RSQQAARDKQSPSQANGCSDQRP), 191–234 (NQMG…PSGH), and 267–291 (GDASQKEPSSFLPFPFEQSGGAPQS). Phosphoserine is present on residues serine 162, serine 199, and serine 200. Positions 193 to 229 (MGGSNISSPGLQPSTQLSNLGSTETLEETPSGSQDKS) are enriched in polar residues. A phosphoserine mark is found at serine 335 and serine 339. Threonine 367 is modified (phosphothreonine). Serine 372 carries the phosphoserine modification. Arginine 395 carries the post-translational modification Asymmetric dimethylarginine. Threonine 420 carries the phosphothreonine modification. Serine 441, serine 542, serine 543, and serine 545 each carry phosphoserine. Residues threonine 548 and threonine 551 each carry the phosphothreonine modification.

Belongs to the DCP1 family. As to quaternary structure, forms a complex with EDC3, DCP2, DDX6 and EDC4/HEDLS, within this complex directly interacts with EDC3. Part of a cytoplasmic complex containing proteins involved in mRNA decay, including XRN1 and LSM1. Interacts with DCP1B. Interacts with DCP2. Interacts with DDX17 in an RNA-independent manner. Interacts with PNRC2. Interacts with SMAD4. Interacts with UPF1. Interacts with ZC3HAV1. Interacts with ZFP36L1. Interacts with NBDY. Interacts with DHX34; the interaction is RNA-independent. As to expression, ubiquitous, with highest expression in the spleen and testis (at protein level).

The protein localises to the cytoplasm. The protein resides in the P-body. It is found in the nucleus. The enzyme catalyses a 5'-end (N(7)-methyl 5'-triphosphoguanosine)-ribonucleoside in mRNA + H2O = N(7)-methyl-GDP + a 5'-end phospho-ribonucleoside in mRNA + 2 H(+). Necessary for the degradation of mRNAs, both in normal mRNA turnover and in nonsense-mediated mRNA decay. Removes the 7-methyl guanine cap structure from mRNA molecules, yielding a 5'-phosphorylated mRNA fragment and 7m-GDP. Contributes to the transactivation of target genes after stimulation by TGFB1. Essential for embryonic development. This chain is mRNA-decapping enzyme 1A (Dcp1a), found in Mus musculus (Mouse).